A 54-amino-acid polypeptide reads, in one-letter code: Apelin receptor early endogenous ligand (54 aa).

A signal peptide spans 1–25 (MRFQPLFWVFFIFAMSLLFITEEKS).

It belongs to the Elabela/Toddler family. Interacts with APLNR.

The protein localises to the secreted. Its subcellular location is the extracellular space. Its function is as follows. Peptide hormone that functions as endogenous ligand for the G-protein-coupled apelin receptor (APLNR/APJ), that plays a role in the regulation of normal cardiovascular function and fluid homeostasis. Functions as a balanced agonist activating both G(i) protein pathway and beta-arrestin pathway of APLNR. Downstream G proteins activation, apelin can inhibit cAMP production and activate key intracellular effectors such as ERKs. On the other hand, APLNR activation induces beta-arrestin recruitment to the membrane leading to desensitization and internalization of the receptor. Required for mesendodermal differentiation, blood vessels formation and heart morphogenesis during early development and for adult cardiovascular homeostasis. Acts as a motogen by promoting mesendodermal cell migration during gastrulation by binding and activating APLNR. Acts as an early embryonic regulator of cellular movement with a role in migration and development of cardiac progenitor cells. May act as a chemoattractant for the activation of angioblast migration toward the embryonic midline, i.e. the position of the future vessel formation, during vasculogenesis. Positively regulates sinus venosus (SV)-derived endothelial cells migration into the developing heart to promote coronary blood vessel sprouting. Plays a role in placental vascular development; promotes placental trophoblast invasion and spiral artery remodeling in the uterus. Involved in the regulation of maternal cardiovascular homeostasis to prevent gestational hypertension and for potent cardioprotective functions during heart failure. Mediates myocardial contractility in an ERK1/2-dependent manner. The polypeptide is Apelin receptor early endogenous ligand (Rattus norvegicus (Rat)).